The following is an 84-amino-acid chain: RQC P-site tRNA stabilizing factor (84 aa).

One can recognise an S4 RNA-binding domain in the interval 1-64 (MRIDKFLQSV…IEEYTILQIP (64 aa)).

It belongs to the RqcP family. As to quaternary structure, associates with stalled 50S ribosomal subunits. Binds to RqcH, 23S rRNA and the P-site tRNA. Does not require RqcH for association with 50S subunits.

Its function is as follows. Key component of the ribosome quality control system (RQC), a ribosome-associated complex that mediates the extraction of incompletely synthesized nascent chains from stalled ribosomes and their subsequent degradation. RqcH recruits Ala-charged tRNA, and with RqcP directs the elongation of stalled nascent chains on 50S ribosomal subunits, leading to non-templated C-terminal alanine extensions (Ala tail). The Ala tail promotes nascent chain degradation. RqcP is associated with the translocation-like movement of the peptidyl-tRNA from the A-site into the P-site. This Helicobacter pylori (strain J99 / ATCC 700824) (Campylobacter pylori J99) protein is RQC P-site tRNA stabilizing factor.